The primary structure comprises 840 residues: Microcephalin (840 aa).

One can recognise a BRCT 1 domain in the interval M1–A93. Positions K184–S206 are disordered. Residues L190–S206 are compositionally biased toward polar residues. A phosphoserine mark is found at S279, S287, S296, and S333. Disordered stretches follow at residues P313–R379 and P418–S437. The residue at position 335 (T335) is a Phosphothreonine. The segment covering K355–R378 has biased composition (basic residues). Positions E427–S437 are enriched in polar residues. Position 552 is a phosphoserine (S552). The disordered stretch occupies residues L562 to H586. Positions K563–E581 are enriched in polar residues. BRCT domains are found at residues S644–L734 and Y755–L837.

In terms of assembly, interacts with CDC27 and maybe other components of the APC/C complex. Interacts with histone variant H2AX under DNA damage conditions.

It localises to the cytoplasm. The protein localises to the cytoskeleton. Its subcellular location is the microtubule organizing center. The protein resides in the centrosome. Its function is as follows. Implicated in chromosome condensation and DNA damage induced cellular responses. May play a role in neurogenesis and regulation of the size of the cerebral cortex. In Hylobates lar (Lar gibbon), this protein is Microcephalin.